The sequence spans 99 residues: Protein Tat (99 aa).

The interaction with human CREBBP stretch occupies residues 1–24 (MEVVDPKIDPWNHPGSQPETPCNN). A transactivation region spans residues 1 to 48 (MEVVDPKIDPWNHPGSQPETPCNNCYCKKCCFHCPLCFMKKGLGISYG). 3 residues coordinate Zn(2+): Cys-22, Cys-25, and Cys-27. A cysteine-rich region spans residues 22 to 37 (CNNCYCKKCCFHCPLC). Lys-28 is subject to N6-acetyllysine; by host PCAF. Positions 30, 33, 34, and 37 each coordinate Zn(2+). The tract at residues 38-48 (FMKKGLGISYG) is core. The disordered stretch occupies residues 47–99 (YGRKKRRQRRRTPQGSKIHQDPVPKQPLSQTRGDPTGPEESKKKVESQTETDP). Residues 48–58 (GRKKRRQRRRT) show a composition bias toward basic residues. Positions 49 to 57 (RKKRRQRRR) match the Nuclear localization signal, RNA-binding (TAR), and protein transduction motif. The tract at residues 49 to 86 (RKKRRQRRRTPQGSKIHQDPVPKQPLSQTRGDPTGPEE) is interaction with the host capping enzyme RNGTT. Residues Lys-50 and Lys-51 each carry the N6-acetyllysine; by host EP300 and GCN5L2 modification. Arg-52 and Arg-53 each carry asymmetric dimethylarginine; by host PRMT6. A Glycyl lysine isopeptide (Lys-Gly) (interchain with G-Cter in ubiquitin) cross-link involves residue Lys-71. A Cell attachment site motif is present at residues 78 to 80 (RGD).

It belongs to the lentiviruses Tat family. In terms of assembly, interacts with host CCNT1. Associates with the P-TEFb complex composed at least of Tat, P-TEFb (CDK9 and CCNT1), TAR RNA, RNA Pol II. Recruits the HATs CREBBP, TAF1/TFIID, EP300, PCAF and GCN5L2. Interacts with host KAT5/Tip60; this interaction targets the latter to degradation. Interacts with the host deacetylase SIRT1. Interacts with host capping enzyme RNGTT; this interaction stimulates RNGTT. Binds to host KDR, and to the host integrins ITGAV/ITGB3 and ITGA5/ITGB1. Interacts with host KPNB1/importin beta-1 without previous binding to KPNA1/importin alpha-1. Interacts with EIF2AK2. Interacts with host nucleosome assembly protein NAP1L1; this interaction may be required for the transport of Tat within the nucleus, since the two proteins interact at the nuclear rim. Interacts with host C1QBP/SF2P32; this interaction involves lysine-acetylated Tat. Interacts with the host chemokine receptors CCR2, CCR3 and CXCR4. Interacts with host DPP4/CD26; this interaction may trigger an anti-proliferative effect. Interacts with host LDLR. Interacts with the host extracellular matrix metalloproteinase MMP1. Interacts with host PRMT6; this interaction mediates Tat's methylation. Interacts with, and is ubiquitinated by MDM2/Hdm2. Interacts with host PSMC3 and HTATIP2. Interacts with STAB1; this interaction may overcome SATB1-mediated repression of IL2 and IL2RA (interleukin) in T cells by binding to the same domain than HDAC1. Interacts (when acetylated) with human CDK13, thereby increasing HIV-1 mRNA splicing and promoting the production of the doubly spliced HIV-1 protein Nef. Interacts with host TBP; this interaction modulates the activity of transcriptional pre-initiation complex. Interacts with host RELA. Interacts with host PLSCR1; this interaction negatively regulates Tat transactivation activity by altering its subcellular distribution. Asymmetrical arginine methylation by host PRMT6 seems to diminish the transactivation capacity of Tat and affects the interaction with host CCNT1. Post-translationally, acetylation by EP300, CREBBP, GCN5L2/GCN5 and PCAF regulates the transactivation activity of Tat. EP300-mediated acetylation of Lys-50 promotes dissociation of Tat from the TAR RNA through the competitive binding to PCAF's bromodomain. In addition, the non-acetylated Tat's N-terminus can also interact with PCAF. PCAF-mediated acetylation of Lys-28 enhances Tat's binding to CCNT1. Lys-50 is deacetylated by SIRT1. In terms of processing, polyubiquitination by host MDM2 does not target Tat to degradation, but activates its transactivation function and fosters interaction with CCNT1 and TAR RNA. Phosphorylated by EIF2AK2 on serine and threonine residues adjacent to the basic region important for TAR RNA binding and function. Phosphorylation of Tat by EIF2AK2 is dependent on the prior activation of EIF2AK2 by dsRNA.

It localises to the host nucleus. It is found in the host nucleolus. Its subcellular location is the host cytoplasm. The protein localises to the secreted. Functionally, transcriptional activator that increases RNA Pol II processivity, thereby increasing the level of full-length viral transcripts. Recognizes a hairpin structure at the 5'-LTR of the nascent viral mRNAs referred to as the transactivation responsive RNA element (TAR) and recruits the cyclin T1-CDK9 complex (P-TEFb complex) that will in turn hyperphosphorylate the RNA polymerase II to allow efficient elongation. The CDK9 component of P-TEFb and other Tat-activated kinases hyperphosphorylate the C-terminus of RNA Pol II that becomes stabilized and much more processive. Other factors such as HTATSF1/Tat-SF1, SUPT5H/SPT5, and HTATIP2 are also important for Tat's function. Besides its effect on RNA Pol II processivity, Tat induces chromatin remodeling of proviral genes by recruiting the histone acetyltransferases (HATs) CREBBP, EP300 and PCAF to the chromatin. This also contributes to the increase in proviral transcription rate, especially when the provirus integrates in transcriptionally silent region of the host genome. To ensure maximal activation of the LTR, Tat mediates nuclear translocation of NF-kappa-B by interacting with host RELA. Through its interaction with host TBP, Tat may also modulate transcription initiation. Tat can reactivate a latently infected cell by penetrating in it and transactivating its LTR promoter. In the cytoplasm, Tat is thought to act as a translational activator of HIV-1 mRNAs. In terms of biological role, extracellular circulating Tat can be endocytosed by surrounding uninfected cells via the binding to several surface receptors such as CD26, CXCR4, heparan sulfate proteoglycans (HSPG) or LDLR. Neurons are rarely infected, but they internalize Tat via their LDLR. Through its interaction with nuclear HATs, Tat is potentially able to control the acetylation-dependent cellular gene expression. Modulates the expression of many cellular genes involved in cell survival, proliferation or in coding for cytokines or cytokine receptors. Tat plays a role in T-cell and neurons apoptosis. Tat induced neurotoxicity and apoptosis probably contribute to neuroAIDS. Circulating Tat also acts as a chemokine-like and/or growth factor-like molecule that binds to specific receptors on the surface of the cells, affecting many cellular pathways. In the vascular system, Tat binds to ITGAV/ITGB3 and ITGA5/ITGB1 integrins dimers at the surface of endothelial cells and competes with bFGF for heparin-binding sites, leading to an excess of soluble bFGF. This chain is Protein Tat, found in Homo sapiens (Human).